A 325-amino-acid polypeptide reads, in one-letter code: DNA-directed RNA polymerase subunit alpha (325 aa).

The tract at residues 1–231 (MQTSLLKPKI…DQLSVFAALE (231 aa)) is alpha N-terminal domain (alpha-NTD). The segment at 246-325 (IDPILLRPVD…ENWPPAGLDK (80 aa)) is alpha C-terminal domain (alpha-CTD).

It belongs to the RNA polymerase alpha chain family. In terms of assembly, homodimer. The RNAP catalytic core consists of 2 alpha, 1 beta, 1 beta' and 1 omega subunit. When a sigma factor is associated with the core the holoenzyme is formed, which can initiate transcription.

It carries out the reaction RNA(n) + a ribonucleoside 5'-triphosphate = RNA(n+1) + diphosphate. DNA-dependent RNA polymerase catalyzes the transcription of DNA into RNA using the four ribonucleoside triphosphates as substrates. The polypeptide is DNA-directed RNA polymerase subunit alpha (Burkholderia orbicola (strain MC0-3)).